The sequence spans 258 residues: Imidazole glycerol phosphate synthase subunit HisF (258 aa).

Residues aspartate 11 and aspartate 130 contribute to the active site.

It belongs to the HisA/HisF family. In terms of assembly, heterodimer of HisH and HisF.

It localises to the cytoplasm. The catalysed reaction is 5-[(5-phospho-1-deoxy-D-ribulos-1-ylimino)methylamino]-1-(5-phospho-beta-D-ribosyl)imidazole-4-carboxamide + L-glutamine = D-erythro-1-(imidazol-4-yl)glycerol 3-phosphate + 5-amino-1-(5-phospho-beta-D-ribosyl)imidazole-4-carboxamide + L-glutamate + H(+). It functions in the pathway amino-acid biosynthesis; L-histidine biosynthesis; L-histidine from 5-phospho-alpha-D-ribose 1-diphosphate: step 5/9. Its function is as follows. IGPS catalyzes the conversion of PRFAR and glutamine to IGP, AICAR and glutamate. The HisF subunit catalyzes the cyclization activity that produces IGP and AICAR from PRFAR using the ammonia provided by the HisH subunit. The polypeptide is Imidazole glycerol phosphate synthase subunit HisF (Stenotrophomonas maltophilia (strain K279a)).